The chain runs to 261 residues: MSRRYDSRTTIFSPEGRLYQVEYAMEAIGHAGTCLGILANDGVLLAAERRNIHKLLDEVFFSEKIYKLNEDMACSVAGITSDANVLTNELRLIAQRYLLQYQEPIPCEQLVTALCDIKQAYTQFGGKRPFGVSLLYIGWDKHYGFQLYQSDPSGNYGGWKATCIGNNSAAAVSMLKQDYKEGEMTLKSALALAIKVLNKTMDVSKLSAEKVEIATLTRENGKTVIRVLKQKEVEQLIKKHEEEEAKAEREKKEKEQKEKDK.

2 positions are modified to phosphoserine: Ser13 and Ser75. N6-acetyllysine is present on Lys127. Ser173 carries the phosphoserine modification. Lys176 is subject to N6-acetyllysine. Residues 240–261 (HEEEEAKAEREKKEKEQKEKDK) are disordered.

This sequence belongs to the peptidase T1A family. As to quaternary structure, the 26S proteasome consists of a 20S proteasome core and two 19S regulatory subunits. The 20S proteasome core is a barrel-shaped complex made of 28 subunits that are arranged in four stacked rings. The two outer rings are each formed by seven alpha subunits, and the two inner rings are formed by seven beta subunits. The proteolytic activity is exerted by three beta-subunits PSMB5, PSMB6 and PSMB7.

The protein resides in the cytoplasm. It localises to the nucleus. Component of the 20S core proteasome complex involved in the proteolytic degradation of most intracellular proteins. This complex plays numerous essential roles within the cell by associating with different regulatory particles. Associated with two 19S regulatory particles, forms the 26S proteasome and thus participates in the ATP-dependent degradation of ubiquitinated proteins. The 26S proteasome plays a key role in the maintenance of protein homeostasis by removing misfolded or damaged proteins that could impair cellular functions, and by removing proteins whose functions are no longer required. Associated with the PA200 or PA28, the 20S proteasome mediates ubiquitin-independent protein degradation. This type of proteolysis is required in several pathways including spermatogenesis (20S-PA200 complex) or generation of a subset of MHC class I-presented antigenic peptides (20S-PA28 complex). This chain is Proteasome subunit alpha type-4 (PSMA4), found in Bos taurus (Bovine).